Here is a 347-residue protein sequence, read N- to C-terminus: Protein RecA (347 aa).

67 to 74 (GPESSGKT) serves as a coordination point for ATP.

This sequence belongs to the RecA family.

It localises to the cytoplasm. Can catalyze the hydrolysis of ATP in the presence of single-stranded DNA, the ATP-dependent uptake of single-stranded DNA by duplex DNA, and the ATP-dependent hybridization of homologous single-stranded DNAs. It interacts with LexA causing its activation and leading to its autocatalytic cleavage. In Sulfurovum sp. (strain NBC37-1), this protein is Protein RecA.